A 244-amino-acid chain; its full sequence is Biosynthetic peptidoglycan transglycosylase (244 aa).

Residues 23 to 43 (LVVIGAWLAGILLFSFLPVPF) form a helical membrane-spanning segment.

Belongs to the glycosyltransferase 51 family.

It localises to the cell inner membrane. The enzyme catalyses [GlcNAc-(1-&gt;4)-Mur2Ac(oyl-L-Ala-gamma-D-Glu-L-Lys-D-Ala-D-Ala)](n)-di-trans,octa-cis-undecaprenyl diphosphate + beta-D-GlcNAc-(1-&gt;4)-Mur2Ac(oyl-L-Ala-gamma-D-Glu-L-Lys-D-Ala-D-Ala)-di-trans,octa-cis-undecaprenyl diphosphate = [GlcNAc-(1-&gt;4)-Mur2Ac(oyl-L-Ala-gamma-D-Glu-L-Lys-D-Ala-D-Ala)](n+1)-di-trans,octa-cis-undecaprenyl diphosphate + di-trans,octa-cis-undecaprenyl diphosphate + H(+). The protein operates within cell wall biogenesis; peptidoglycan biosynthesis. Its function is as follows. Peptidoglycan polymerase that catalyzes glycan chain elongation from lipid-linked precursors. This chain is Biosynthetic peptidoglycan transglycosylase, found in Pectobacterium carotovorum subsp. carotovorum (strain PC1).